Here is a 237-residue protein sequence, read N- to C-terminus: Protein CUSTOS (237 aa).

Disordered regions lie at residues 1-23, 50-69, and 97-237; these read MAAP…LDRF, LRVR…TTPE, and ISKA…LGNE. The segment covering 52-62 has biased composition (basic and acidic residues); that stretch reads VRPDCHEHDGN. Residues 162-177 show a composition bias toward polar residues; sequence STLQQEPQSTPSNVCD. The segment covering 181–190 has biased composition (basic residues); that stretch reads PKKKRKKKKK. Residues 182–190 carry the Nucleolar localization signal (NLS1) motif; that stretch reads KKKRKKKKK. Composition is skewed to basic and acidic residues over residues 203–216 and 225–237; these read ETMH…ELQA and KLEM…LGNE. Positions 217–225 match the Nucleolar localization signal (NLS2) motif; the sequence is KRKKKKKQK.

It belongs to the CUSTOS family. Interacts (via NLS1 and NLS2) with dvl2; the interaction is negatively regulated by Wnt stimulation. Interacts with csnk1a1. Interacts with ctnnb1; the interaction is positively regulated by Wnt stimulation. Phosphorylated by ck1/csnk1a1.

It localises to the nucleus envelope. Essential for Spemann-Mangold organizer formation and subsequent anterior head development in the embryo. Inhibits canonical Wnt signaling pathway by antagonizing nuclear import of beta-catenin (ctnnb1) during embryogenesis. This Xenopus laevis (African clawed frog) protein is Protein CUSTOS.